The primary structure comprises 431 residues: MARTDAMAPRTLLLVLSLGYAFGFNEPLNVVSHLNDDWFLFGDSRSDCNHINNLSQQNYNYMDINPELCKSGKISAKAGNSLFKSFHFTDFYNYTGEGSQIIFYEGVNFTPYVGFKCLNNGDNNRWMGNKARFYTQLYQKMAHYRSLSVINITYTYNGSAGPVSMCKHIANGVTLTLNNPTFIGKEVSKPDYYYESEANFTLQGCDEFIVPLCVFNGQYLSSKLYYDDSQYYYNVDTGVLYGFNSTLNITSGLDLTCIYLALTPGNYISISNELLLTVPSKAICLRKPKAFTPVQVVDSRWHSNRQSDNMTAIACQLPYCYFRNTTSDYNGVYDSHHGDAGFTSILAGLMYNVSCLAQQGAFVYNNVSSSWPQYPYGHCPTAANIVFMAPVCMYDPLPVILLGVLLGIAVLIIVFLMFYFMTDSGVRLHEA.

An N-terminal signal peptide occupies residues 1–21 (MARTDAMAPRTLLLVLSLGYA). The tract at residues 11-131 (TLLLVLSLGY…DNNRWMGNKA (121 aa)) is esterase domain 1. Residues 22-399 (FGFNEPLNVV…PVCMYDPLPV (378 aa)) lie on the Virion surface side of the membrane. Ser-44 serves as the catalytic Nucleophile. The cysteines at positions 48 and 69 are disulfide-linked. N-linked (GlcNAc...) asparagine; by host glycosylation is found at Asn-53, Asn-93, Asn-151, Asn-157, Asn-199, Asn-244, Asn-248, and Asn-309. Cys-117 and Cys-166 are disulfide-bonded. Positions 132–274 (RFYTQLYQKM…GNYISISNEL (143 aa)) are receptor binding. Cystine bridges form between Cys-205-Cys-284 and Cys-213-Cys-257. Positions 275–387 (LLTVPSKAIC…HCPTAANIVF (113 aa)) are esterase domain 2. Cys-315 and Cys-320 form a disulfide bridge. A glycan (N-linked (GlcNAc...) asparagine; by host) is linked at Asn-324. Residues Asp-334 and His-337 each act as charge relay system in the active site. Asn-352 and Asn-366 each carry an N-linked (GlcNAc...) asparagine; by host glycan. Residues Cys-355 and Cys-379 are joined by a disulfide bond. Residues 400-420 (ILLGVLLGIAVLIIVFLMFYF) form a helical membrane-spanning segment. At 421-431 (MTDSGVRLHEA) the chain is on the intravirion side.

Belongs to the influenza type C/coronaviruses hemagglutinin-esterase family. As to quaternary structure, homodimer; disulfide-linked. Forms a complex with the M protein in the pre-Golgi. Associates then with S-M complex to form a ternary complex S-M-HE. In terms of processing, N-glycosylated in the host RER.

It localises to the virion membrane. The protein localises to the host cell membrane. It carries out the reaction N-acetyl-9-O-acetylneuraminate + H2O = N-acetylneuraminate + acetate + H(+). The catalysed reaction is N-acetyl-4-O-acetylneuraminate + H2O = N-acetylneuraminate + acetate + H(+). Functionally, structural protein that makes short spikes at the surface of the virus. Contains receptor binding and receptor-destroying activities. Mediates de-O-acetylation of N-acetyl-4-O-acetylneuraminic acid, which is probably the receptor determinant recognized by the virus on the surface of erythrocytes and susceptible cells. This receptor-destroying activity is important for virus release as it probably helps preventing self-aggregation and ensures the efficient spread of the progeny virus from cell to cell. May serve as a secondary viral attachment protein for initiating infection, the spike protein being the major one. May become a target for both the humoral and the cellular branches of the immune system. The chain is Hemagglutinin-esterase from Murine coronavirus (strain DVIM) (MHV-DVIM).